Here is a 262-residue protein sequence, read N- to C-terminus: UPF0619 GPI-anchored membrane protein C1322.10 (262 aa).

An N-terminal signal peptide occupies residues 1–20 (MLARVGTTLFFLANALAAYA). Disordered regions lie at residues 136–165 (STSASSTSSSTATPSSSSTTSSSSSSSSST) and 175–194 (ISSSASSSVSSSSASSSGSI). Asparagine 207 and asparagine 227 each carry an N-linked (GlcNAc...) asparagine glycan. A lipid anchor (GPI-like-anchor amidated asparagine) is attached at asparagine 242. A propeptide spans 243–262 (GVAQLSVAACMGIAALMLIA) (removed in mature form).

Belongs to the UPF0619 family.

The protein localises to the golgi apparatus membrane. It is found in the cell membrane. In Schizosaccharomyces pombe (strain 972 / ATCC 24843) (Fission yeast), this protein is UPF0619 GPI-anchored membrane protein C1322.10.